Reading from the N-terminus, the 171-residue chain is Adenine phosphoribosyltransferase (171 aa).

Belongs to the purine/pyrimidine phosphoribosyltransferase family. In terms of assembly, homodimer.

The protein localises to the cytoplasm. It carries out the reaction AMP + diphosphate = 5-phospho-alpha-D-ribose 1-diphosphate + adenine. The protein operates within purine metabolism; AMP biosynthesis via salvage pathway; AMP from adenine: step 1/1. Functionally, catalyzes a salvage reaction resulting in the formation of AMP, that is energically less costly than de novo synthesis. This Shouchella clausii (strain KSM-K16) (Alkalihalobacillus clausii) protein is Adenine phosphoribosyltransferase.